Consider the following 111-residue polypeptide: Cell cycle protein GpsB (111 aa).

The stretch at 34–72 (LDMIIKDYEVFHKELEQLQQQNARLKRELEEQKLAAAQA) forms a coiled coil.

This sequence belongs to the GpsB family. In terms of assembly, forms polymers through the coiled coil domains. Interacts with PBP1, MreC and EzrA.

The protein resides in the cytoplasm. Divisome component that associates with the complex late in its assembly, after the Z-ring is formed, and is dependent on DivIC and PBP2B for its recruitment to the divisome. Together with EzrA, is a key component of the system that regulates PBP1 localization during cell cycle progression. Its main role could be the removal of PBP1 from the cell pole after pole maturation is completed. Also contributes to the recruitment of PBP1 to the division complex. Not essential for septum formation. The sequence is that of Cell cycle protein GpsB from Bacillus cytotoxicus (strain DSM 22905 / CIP 110041 / 391-98 / NVH 391-98).